The following is a 1053-amino-acid chain: Carbamoyl phosphate synthase large chain (1053 aa).

Residues M1–D397 are carboxyphosphate synthetic domain. ATP is bound by residues R127, R167, G173, G174, E206, V208, E213, G239, V240, H241, Q282, and E294. One can recognise an ATP-grasp 1 domain in the interval K131–I323. Mg(2+)-binding residues include Q282, E294, and N296. Residues Q282, E294, and N296 each coordinate Mn(2+). The interval T398–L530 is oligomerization domain. The segment at T531 to T919 is carbamoyl phosphate synthetic domain. In terms of domain architecture, ATP-grasp 2 spans S661 to L852. Residues R697, R736, L738, E743, G768, V769, H770, S771, Q811, and E823 each contribute to the ATP site. 3 residues coordinate Mg(2+): Q811, E823, and N825. Residues Q811, E823, and N825 each coordinate Mn(2+). Positions N918–S1053 constitute an MGS-like domain. The tract at residues I920–S1053 is allosteric domain.

The protein belongs to the CarB family. In terms of assembly, composed of two chains; the small (or glutamine) chain promotes the hydrolysis of glutamine to ammonia, which is used by the large (or ammonia) chain to synthesize carbamoyl phosphate. Tetramer of heterodimers (alpha,beta)4. The cofactor is Mg(2+). Mn(2+) is required as a cofactor.

It catalyses the reaction hydrogencarbonate + L-glutamine + 2 ATP + H2O = carbamoyl phosphate + L-glutamate + 2 ADP + phosphate + 2 H(+). The enzyme catalyses hydrogencarbonate + NH4(+) + 2 ATP = carbamoyl phosphate + 2 ADP + phosphate + 2 H(+). The protein operates within amino-acid biosynthesis; L-arginine biosynthesis; carbamoyl phosphate from bicarbonate: step 1/1. It participates in pyrimidine metabolism; UMP biosynthesis via de novo pathway; (S)-dihydroorotate from bicarbonate: step 1/3. Its function is as follows. Large subunit of the glutamine-dependent carbamoyl phosphate synthetase (CPSase). CPSase catalyzes the formation of carbamoyl phosphate from the ammonia moiety of glutamine, carbonate, and phosphate donated by ATP, constituting the first step of 2 biosynthetic pathways, one leading to arginine and/or urea and the other to pyrimidine nucleotides. The large subunit (synthetase) binds the substrates ammonia (free or transferred from glutamine from the small subunit), hydrogencarbonate and ATP and carries out an ATP-coupled ligase reaction, activating hydrogencarbonate by forming carboxy phosphate which reacts with ammonia to form carbamoyl phosphate. In Methanocorpusculum labreanum (strain ATCC 43576 / DSM 4855 / Z), this protein is Carbamoyl phosphate synthase large chain.